The sequence spans 695 residues: Glycine--tRNA ligase beta subunit (695 aa).

Belongs to the class-II aminoacyl-tRNA synthetase family. Tetramer of two alpha and two beta subunits.

It is found in the cytoplasm. It carries out the reaction tRNA(Gly) + glycine + ATP = glycyl-tRNA(Gly) + AMP + diphosphate. The sequence is that of Glycine--tRNA ligase beta subunit from Desulforamulus reducens (strain ATCC BAA-1160 / DSM 100696 / MI-1) (Desulfotomaculum reducens).